Reading from the N-terminus, the 490-residue chain is Glutamate--tRNA ligase (490 aa).

Residues 15–25 carry the 'HIGH' region motif; sequence PSPTGYLHVGG. The 'KMSKS' region signature appears at 259–263; the sequence is KLSKR. Residue K262 coordinates ATP.

The protein belongs to the class-I aminoacyl-tRNA synthetase family. Glutamate--tRNA ligase type 1 subfamily. In terms of assembly, monomer.

It localises to the cytoplasm. The enzyme catalyses tRNA(Glu) + L-glutamate + ATP = L-glutamyl-tRNA(Glu) + AMP + diphosphate. In terms of biological role, catalyzes the attachment of glutamate to tRNA(Glu) in a two-step reaction: glutamate is first activated by ATP to form Glu-AMP and then transferred to the acceptor end of tRNA(Glu). This is Glutamate--tRNA ligase from Bdellovibrio bacteriovorus (strain ATCC 15356 / DSM 50701 / NCIMB 9529 / HD100).